The sequence spans 1443 residues: Sterol 3-beta-glucosyltransferase ATG26 (1443 aa).

Positions 1 to 13 are enriched in low complexity; the sequence is MATQADDAAASQA. Disordered regions lie at residues 1-69 and 88-187; these read MATQ…MFMN and NDRF…LTLT. Positions 18-32 are enriched in basic and acidic residues; it reads GDLKEHVHDELDKIQ. Residues 49–58 show a composition bias toward acidic residues; sequence DSEDSDDEDN. The span at 104-117 shows a compositional bias: polar residues; the sequence is QNTRTESIARTSIL. The span at 125–134 shows a compositional bias: basic residues; the sequence is DKVHRRRKLS. The span at 164 to 173 shows a compositional bias: acidic residues; the sequence is EVADEADDEH. The 45-residue stretch at 240-284 folds into the GRAM 1 domain; that stretch reads LKEIFEFDEYEQVIEEYPCWLLQSVLLQGYMYITSKHICFYAYLP. One can recognise a PH domain in the interval 289 to 385; that stretch reads EAVKSGYLSK…WVKSLQRVIF (97 aa). The segment at 463-657 is disordered; the sequence is EQVITGDDHD…HGDRHHGIPH (195 aa). Over residues 506–525 the composition is skewed to low complexity; sequence LAPMSPLSPRSPSQLSPRAS. The segment covering 585–614 has biased composition (polar residues); it reads SFLQSSIENPSISTLSPSSYDEPSASQILQ. The span at 631–642 shows a compositional bias: basic residues; the sequence is SRKRDRSGKRTP. A GRAM 2 domain is found at 765–870; it reads RFRAHFALPE…DCAVTLHQLM (106 aa). Residues 883 to 910 are a coiled coil; sequence DQEEQDDEEAAAAMAERDELQEARQDEF. Residues serine 957, arginine 958, aspartate 960, alanine 1265, histidine 1267, histidine 1280, serine 1283, glycine 1284, threonine 1285, aspartate 1304, and glutamine 1305 each coordinate UDP-alpha-D-glucose. The disordered stretch occupies residues 1385-1443; sequence NAEHGLAEDDDDTEESWTFVGRDEPDPDAVTKKLSDGLAGLGAAGDRPPPLGSQAPTVA. Residues 1405–1419 show a composition bias toward basic and acidic residues; it reads GRDEPDPDAVTKKLS.

It belongs to the glycosyltransferase 28 family.

Its subcellular location is the cytoplasm. The protein resides in the preautophagosomal structure membrane. It carries out the reaction a sterol + UDP-alpha-D-glucose = a sterol 3-beta-D-glucoside + UDP + H(+). It catalyses the reaction ergosterol + UDP-alpha-D-glucose = ergosteryl 3-beta-D-glucoside + UDP + H(+). Its function is as follows. Sterol glycosyltransferase responsible for the glycosylation of ergosterol to form ergosterol-glucoside. The sequence is that of Sterol 3-beta-glucosyltransferase ATG26 from Gibberella zeae (strain ATCC MYA-4620 / CBS 123657 / FGSC 9075 / NRRL 31084 / PH-1) (Wheat head blight fungus).